The primary structure comprises 119 residues: Large ribosomal subunit protein bL19 (119 aa).

Belongs to the bacterial ribosomal protein bL19 family.

In terms of biological role, this protein is located at the 30S-50S ribosomal subunit interface and may play a role in the structure and function of the aminoacyl-tRNA binding site. The polypeptide is Large ribosomal subunit protein bL19 (Leuconostoc citreum (strain KM20)).